Consider the following 388-residue polypeptide: Ferrochelatase (388 aa).

2 residues coordinate Fe cation: H196 and E277.

This sequence belongs to the ferrochelatase family.

It is found in the cytoplasm. It catalyses the reaction heme b + 2 H(+) = protoporphyrin IX + Fe(2+). Its pathway is porphyrin-containing compound metabolism; protoheme biosynthesis; protoheme from protoporphyrin-IX: step 1/1. In terms of biological role, catalyzes the ferrous insertion into protoporphyrin IX. This Trichormus variabilis (strain ATCC 29413 / PCC 7937) (Anabaena variabilis) protein is Ferrochelatase.